The chain runs to 144 residues: Small ribosomal subunit protein uS12 (144 aa).

Residues 1 to 55 form a disordered region; that stretch reads MPTINQLVRKGREDKVVKSKSPALQKGYNSFKKSQTNQSSPQKRGVCTRVGTMTP. The span at 27–42 shows a compositional bias: polar residues; that stretch reads GYNSFKKSQTNQSSPQ. D102 carries the 3-methylthioaspartic acid modification. Residues 119–144 form a disordered region; sequence GVNNRKQGRSKYGTKRPKPGQAAAKK. Basic residues predominate over residues 124–144; it reads KQGRSKYGTKRPKPGQAAAKK.

Belongs to the universal ribosomal protein uS12 family. As to quaternary structure, part of the 30S ribosomal subunit. Contacts proteins S8 and S17. May interact with IF1 in the 30S initiation complex.

In terms of biological role, with S4 and S5 plays an important role in translational accuracy. Its function is as follows. Interacts with and stabilizes bases of the 16S rRNA that are involved in tRNA selection in the A site and with the mRNA backbone. Located at the interface of the 30S and 50S subunits, it traverses the body of the 30S subunit contacting proteins on the other side and probably holding the rRNA structure together. The combined cluster of proteins S8, S12 and S17 appears to hold together the shoulder and platform of the 30S subunit. The polypeptide is Small ribosomal subunit protein uS12 (Brevibacillus brevis (strain 47 / JCM 6285 / NBRC 100599)).